We begin with the raw amino-acid sequence, 281 residues long: MPTASLETTINGAFDARETITPATRGEVRDAVDQALGLLDKGEARVAERAADGKWQVNQWLKKAVLLSFRLNDMSVIPGGPGNAAWWDKVPSKFEGWDENRFRDAGFRAVPGAIVRRSAFIARNVVLMPSFVNLGAYVDESTMVDTWCTVGSCAQIGKRVHISGGAGIGGVLEPLQAGPVIIEDDCFIGARSEVAEGVIVRKGAVLSMGVFLGASTKIVDRTTGEIFMGEVPEYAVVVPGALPGKPLSNGQLGPSTACAVIVKRVDERTRSKTGINELLRD.

The substrate site is built by R108 and D145.

It belongs to the transferase hexapeptide repeat family. As to quaternary structure, homotrimer.

It is found in the cytoplasm. It catalyses the reaction (S)-2,3,4,5-tetrahydrodipicolinate + succinyl-CoA + H2O = (S)-2-succinylamino-6-oxoheptanedioate + CoA. It participates in amino-acid biosynthesis; L-lysine biosynthesis via DAP pathway; LL-2,6-diaminopimelate from (S)-tetrahydrodipicolinate (succinylase route): step 1/3. This chain is 2,3,4,5-tetrahydropyridine-2,6-dicarboxylate N-succinyltransferase, found in Nitrobacter winogradskyi (strain ATCC 25391 / DSM 10237 / CIP 104748 / NCIMB 11846 / Nb-255).